The primary structure comprises 589 residues: Probable 9-cis-epoxycarotenoid dioxygenase NCED5, chloroplastic (589 aa).

Residues methionine 1–serine 45 constitute a chloroplast transit peptide. A compositionally biased stretch (low complexity) spans serine 21 to phenylalanine 34. Residues serine 21 to aspartate 51 are disordered. Histidine 287, histidine 336, histidine 401, and histidine 576 together coordinate Fe cation.

It belongs to the carotenoid oxygenase family. Interacts in vitro with VAR3. Fe(2+) is required as a cofactor. In terms of tissue distribution, detected only in seeds.

It localises to the plastid. The protein localises to the chloroplast thylakoid membrane. It carries out the reaction a 9-cis-epoxycarotenoid + O2 = a 12'-apo-carotenal + 2-cis,4-trans-xanthoxin. The enzyme catalyses 9-cis-violaxanthin + O2 = (3S,5R,6S)-5,6-epoxy-3-hydroxy-5,6-dihydro-12'-apo-beta-caroten-12'-al + 2-cis,4-trans-xanthoxin. The catalysed reaction is 9'-cis-neoxanthin + O2 = (3S,5R,6R)-3,5-dihydroxy-6,7-didehydro-5,6-dihydro-12'-apo-beta-caroten-12'-al + 2-cis,4-trans-xanthoxin. In terms of biological role, has a 11,12(11',12') 9-cis epoxycarotenoid cleavage activity. Catalyzes the first step of abscisic-acid biosynthesis from carotenoids. The chain is Probable 9-cis-epoxycarotenoid dioxygenase NCED5, chloroplastic (NCED5) from Arabidopsis thaliana (Mouse-ear cress).